We begin with the raw amino-acid sequence, 644 residues long: ATP-dependent zinc metalloprotease FtsH (644 aa).

The Stromal segment spans residues 1 to 11; it reads MNDNKNNTVRN. The chain crosses the membrane as a helical span at residues 12–32; it reads LLIGIALLSGISLTAKKFDLI. Residues 33–128 lie on the Lumenal side of the membrane; that stretch reads GVQGSESGKN…FDAHPAEQKN (96 aa). A helical transmembrane segment spans residues 129-149; sequence IFVNILSNILLPIIFITGLVY. Over 150–644 the chain is Stromal; that stretch reads LFQNSENFGG…KNIPYVSKFN (495 aa). 226 to 233 is a binding site for ATP; the sequence is GPPGTGKT. Zn(2+) is bound at residue His447. Glu448 is an active-site residue. Positions 451 and 525 each coordinate Zn(2+).

The protein in the central section; belongs to the AAA ATPase family. In the C-terminal section; belongs to the peptidase M41 family. Homohexamer. Zn(2+) is required as a cofactor.

Its subcellular location is the plastid. It localises to the chloroplast thylakoid membrane. Acts as a processive, ATP-dependent zinc metallopeptidase. This chain is ATP-dependent zinc metalloprotease FtsH, found in Trieres chinensis (Marine centric diatom).